Here is a 155-residue protein sequence, read N- to C-terminus: Aspartate carbamoyltransferase regulatory chain (155 aa).

Zn(2+) is bound by residues C113, C118, C139, and C142.

Belongs to the PyrI family. In terms of assembly, contains catalytic and regulatory chains. It depends on Zn(2+) as a cofactor.

Functionally, involved in allosteric regulation of aspartate carbamoyltransferase. The chain is Aspartate carbamoyltransferase regulatory chain from Methanosphaerula palustris (strain ATCC BAA-1556 / DSM 19958 / E1-9c).